Consider the following 1258-residue polypeptide: Cohesin subunit SA-1 (1258 aa).

The tract at residues 1–59 (MITSELPVLQDSTNETTAHSDAGSELEETEVKGKRKRGRPGRPPSTNKKPRKSPGEKSR) is disordered. Over residues 10-19 (QDSTNETTAH) the composition is skewed to polar residues. At Ser-24 the chain carries Phosphoserine. The 86-residue stretch at 296–381 (FVHRYRDAIA…NRFKDRIVSM (86 aa)) folds into the SCD domain. Residues Ser-756, Ser-1062, and Ser-1065 each carry the phosphoserine modification. Positions 1055-1148 (GGEDDRMSVN…EHGSEPDFLH (94 aa)) are disordered. Residues 1062–1075 (SVNSGSSSSKTSSV) are compositionally biased toward low complexity. Residues 1076 to 1087 (RSKKGRPPLHRK) show a composition bias toward basic residues. Ser-1093 is subject to Phosphoserine. Polar residues predominate over residues 1095–1106 (DNTWLNRTDTMI). The span at 1137–1146 (ESEHGSEPDF) shows a compositional bias: basic and acidic residues. Lys-1161 is covalently cross-linked (Glycyl lysine isopeptide (Lys-Gly) (interchain with G-Cter in SUMO2)).

This sequence belongs to the SCC3 family. As to quaternary structure, cohesin complexes are composed of a heterodimer between a SMC1 protein (SMC1A or SMC1B) and SMC3, which are attached via their hinge domain, and RAD21 which link them at their heads, and one STAG protein (STAG1, STAG2 or STAG3). In cohesin complexes, STAG1 is mutually exclusive with STAG2 and STAG3. Interacts directly with RAD21 in cohesin complex. The cohesin complex interacts with the cohesin loading complex subunits NIPBL/Scc2 (via HEAT repeats) and MAU2/Scc4. NIPBL directly contacts all members of the complex, RAD21, SMC1A/B, SMC3 and STAG1. In terms of processing, phosphorylated by PLK1. The large dissociation of cohesin from chromosome arms during prophase is partly due to its phosphorylation.

It is found in the nucleus. It localises to the chromosome. Functionally, component of cohesin complex, a complex required for the cohesion of sister chromatids after DNA replication. The cohesin complex apparently forms a large proteinaceous ring within which sister chromatids can be trapped. At anaphase, the complex is cleaved and dissociates from chromatin, allowing sister chromatids to segregate. The cohesin complex may also play a role in spindle pole assembly during mitosis. The polypeptide is Cohesin subunit SA-1 (Stag1) (Mus musculus (Mouse)).